A 248-amino-acid polypeptide reads, in one-letter code: Protein maestro (248 aa).

The tract at residues 1–23 (MEQTRKIPNQPLPTPTSQSKKRR) is disordered. Residues 128–163 (SFFIDITLQARTLLDDEDDSVRYSAFVLFGQLASFA) form an HEAT repeat.

As to expression, prominent expression seen in testis, brain, liver and heart. Weakly expressed in the kidney.

Its subcellular location is the nucleus. The protein resides in the nucleolus. This chain is Protein maestro (Mro), found in Mus musculus (Mouse).